Here is a 147-residue protein sequence, read N- to C-terminus: D-aminoacyl-tRNA deacylase (147 aa).

A Gly-cisPro motif, important for rejection of L-amino acids motif is present at residues 136-137 (GP).

It belongs to the DTD family. In terms of assembly, homodimer.

Its subcellular location is the cytoplasm. The enzyme catalyses glycyl-tRNA(Ala) + H2O = tRNA(Ala) + glycine + H(+). It catalyses the reaction a D-aminoacyl-tRNA + H2O = a tRNA + a D-alpha-amino acid + H(+). Its function is as follows. An aminoacyl-tRNA editing enzyme that deacylates mischarged D-aminoacyl-tRNAs. Also deacylates mischarged glycyl-tRNA(Ala), protecting cells against glycine mischarging by AlaRS. Acts via tRNA-based rather than protein-based catalysis; rejects L-amino acids rather than detecting D-amino acids in the active site. By recycling D-aminoacyl-tRNA to D-amino acids and free tRNA molecules, this enzyme counteracts the toxicity associated with the formation of D-aminoacyl-tRNA entities in vivo and helps enforce protein L-homochirality. This chain is D-aminoacyl-tRNA deacylase, found in Streptococcus pneumoniae serotype 2 (strain D39 / NCTC 7466).